The primary structure comprises 323 residues: NADH-cytochrome b5 reductase 2 (323 aa).

A helical transmembrane segment spans residues 32–48; sequence LAPIYVAVGLTGLGVGL. One can recognise an FAD-binding FR-type domain in the interval 72 to 177; sequence QGWVDLKLAQ…KGPIPKYPWE (106 aa). 180–215 provides a ligand contact to FAD; that stretch reads KHKHICLIAGGTGITPMYQLARKIFKDPEDQTKVTL.

It belongs to the flavoprotein pyridine nucleotide cytochrome reductase family. FAD is required as a cofactor.

It is found in the mitochondrion outer membrane. It carries out the reaction 2 Fe(III)-[cytochrome b5] + NADH = 2 Fe(II)-[cytochrome b5] + NAD(+) + H(+). May mediate the reduction of outer membrane cytochrome b5. This is NADH-cytochrome b5 reductase 2 (mcr1) from Neosartorya fischeri (strain ATCC 1020 / DSM 3700 / CBS 544.65 / FGSC A1164 / JCM 1740 / NRRL 181 / WB 181) (Aspergillus fischerianus).